We begin with the raw amino-acid sequence, 533 residues long: (E)-beta-farnesene synthase (533 aa).

5 residues coordinate Mg(2+): Asp-286, Asp-290, Asn-430, Ser-434, and Glu-438. The DDXXD motif motif lies at Asp-286–Asp-290.

Belongs to the terpene synthase family. The cofactor is Mg(2+). Co(2+) serves as cofactor. Requires Mn(2+) as cofactor.

It localises to the cytoplasm. The enzyme catalyses (2E,6E)-farnesyl diphosphate = (E)-beta-farnesene + diphosphate. It functions in the pathway secondary metabolite biosynthesis; terpenoid biosynthesis. Sesquiterpene cyclase catalyzing the production of beta-farnesene and alpha-bergamotene in equal amounts from farnesyl diphosphate. Involved in indirect defense by producing volatile signals attracting natural enemies of herbivores. The sequence is that of (E)-beta-farnesene synthase from Zea mays subsp. huehuetenangensis (San Antonio Huista teosinte).